A 270-amino-acid polypeptide reads, in one-letter code: NAD kinase (270 aa).

Residue aspartate 49 is the Proton acceptor of the active site. NAD(+)-binding positions include 49–50 (DG), arginine 54, 126–127 (NE), arginine 152, aspartate 154, 165–170 (TAYNKS), alanine 189, and glutamine 227.

This sequence belongs to the NAD kinase family. The cofactor is a divalent metal cation.

Its subcellular location is the cytoplasm. It catalyses the reaction NAD(+) + ATP = ADP + NADP(+) + H(+). In terms of biological role, involved in the regulation of the intracellular balance of NAD and NADP, and is a key enzyme in the biosynthesis of NADP. Catalyzes specifically the phosphorylation on 2'-hydroxyl of the adenosine moiety of NAD to yield NADP. This is NAD kinase from Lactococcus lactis subsp. lactis (strain IL1403) (Streptococcus lactis).